The chain runs to 487 residues: NADH-quinone oxidoreductase subunit N (487 aa).

Helical transmembrane passes span 8–28, 37–57, 71–91, 104–124, 125–145, 159–179, 203–223, 235–255, 269–289, 303–323, 327–347, 374–394, 408–427, and 449–469; these read LLALLPLLLTTGAMVALMLAI, AFVVTIAGLNLALFSLPIVMA, GYAVFYMGLVLIGALATCTFG, EFYLLLLIATAGGLVLAGSRH, LASLFIGIEMLTLPMFGLVGY, YMVLSAAATAFLLFGMALLYA, LMGGLGLMLVGFAFKLSLAPF, PAPVATFLATVSKIAVFCVLL, IHWLLAAMAVISIVIGNLLAL, ISHFGYLLAVIVASRLGQMPV, GVYLLMYLFTSLGAFGVISMM, AVLTVMMLSLAGIPMTLGFIG, WWLSGAIVLGSALGLYYYLR, and AITSGGLVVLLSAALVVALGL.

Belongs to the complex I subunit 2 family. As to quaternary structure, NDH-1 is composed of 14 different subunits. Subunits NuoA, H, J, K, L, M, N constitute the membrane sector of the complex.

It is found in the cell inner membrane. It catalyses the reaction a quinone + NADH + 5 H(+)(in) = a quinol + NAD(+) + 4 H(+)(out). Its function is as follows. NDH-1 shuttles electrons from NADH, via FMN and iron-sulfur (Fe-S) centers, to quinones in the respiratory chain. The immediate electron acceptor for the enzyme in this species is believed to be ubiquinone. Couples the redox reaction to proton translocation (for every two electrons transferred, four hydrogen ions are translocated across the cytoplasmic membrane), and thus conserves the redox energy in a proton gradient. The protein is NADH-quinone oxidoreductase subunit N of Aeromonas hydrophila subsp. hydrophila (strain ATCC 7966 / DSM 30187 / BCRC 13018 / CCUG 14551 / JCM 1027 / KCTC 2358 / NCIMB 9240 / NCTC 8049).